A 583-amino-acid chain; its full sequence is Ankyrin repeat-containing protein NPR4 (583 aa).

7 ANK repeats span residues 68 to 97, 119 to 148, 154 to 183, 188 to 218, 223 to 252, 257 to 286, and 291 to 321; these read HNDT…AAVA, AGET…AEGV, SGYD…LLAK, ANTS…GLVE, NGKN…QLAR, KGQT…AIVM, and NGNT…HVNA. A run of 4 helical transmembrane segments spans residues 414–434, 452–472, 492–512, and 518–538; these read VTVV…TVPG, IFFI…VVQI, LMWL…YIVL, and WAAL…LGTM.

Its subcellular location is the cell membrane. Functionally, involved in salt stress tolerance. This Oryza sativa subsp. japonica (Rice) protein is Ankyrin repeat-containing protein NPR4.